A 278-amino-acid chain; its full sequence is Ribosomal RNA small subunit methyltransferase A (278 aa).

The S-adenosyl-L-methionine site is built by Asn-25, Leu-27, Gly-52, Glu-73, Asp-97, and Asn-117.

The protein belongs to the class I-like SAM-binding methyltransferase superfamily. rRNA adenine N(6)-methyltransferase family. RsmA subfamily.

The protein localises to the cytoplasm. The enzyme catalyses adenosine(1518)/adenosine(1519) in 16S rRNA + 4 S-adenosyl-L-methionine = N(6)-dimethyladenosine(1518)/N(6)-dimethyladenosine(1519) in 16S rRNA + 4 S-adenosyl-L-homocysteine + 4 H(+). In terms of biological role, specifically dimethylates two adjacent adenosines (A1518 and A1519) in the loop of a conserved hairpin near the 3'-end of 16S rRNA in the 30S particle. May play a critical role in biogenesis of 30S subunits. This Desulfitobacterium hafniense (strain DSM 10664 / DCB-2) protein is Ribosomal RNA small subunit methyltransferase A.